The primary structure comprises 534 residues: GTPase Obg (534 aa).

One can recognise an Obg domain in the interval 2–159 (ASFVDRVVLH…SDIVLELKSI (158 aa)). The disordered stretch occupies residues 63 to 82 (APHRHASNGGQGMGDWRGGK). The segment covering 71–82 (GGQGMGDWRGGK) has biased composition (gly residues). One can recognise an OBG-type G domain in the interval 160 to 343 (ADIALVGFPS…LSFAMAELVT (184 aa)). GTP contacts are provided by residues 166–173 (GFPSAGKS), 191–195 (FTTLI), 212–215 (DVPG), 295–298 (NKID), and 324–326 (SAS). Residues serine 173 and threonine 193 each coordinate Mg(2+). In terms of domain architecture, OCT spans 363–449 (PRAVNRKEFT…ENAVVFDWEP (87 aa)). Residues 456 to 534 (ELLSGPRGTD…AASTDDGDAL (79 aa)) are disordered. Composition is skewed to basic and acidic residues over residues 464 to 504 (TDPR…ERKA) and 512 to 526 (SARR…REAA).

This sequence belongs to the TRAFAC class OBG-HflX-like GTPase superfamily. OBG GTPase family. As to quaternary structure, monomer. Mg(2+) is required as a cofactor.

The protein resides in the cytoplasm. Its function is as follows. An essential GTPase which binds GTP, GDP and possibly (p)ppGpp with moderate affinity, with high nucleotide exchange rates and a fairly low GTP hydrolysis rate. Plays a role in control of the cell cycle, stress response, ribosome biogenesis and in those bacteria that undergo differentiation, in morphogenesis control. The protein is GTPase Obg of Renibacterium salmoninarum (strain ATCC 33209 / DSM 20767 / JCM 11484 / NBRC 15589 / NCIMB 2235).